Here is a 346-residue protein sequence, read N- to C-terminus: MLEIVAAIFIVLLGSGICSCAEAALFSVPLVKVRQLSQSNNPSAIALQAIRHRMNRPIGTIVVLNNIFNIVGSITIGALATKHLQDAWMGVFSGILTLLIIVFGEIIPKTLGERYATNIALLIAIPVRFLTLIFTPLVWLIEQITNPFTHGKRVPSTNEAEIKFLATLGYKEGVIEGDEEQMIQRVFQLNDLMAVDLMTPRVIITYLLGELTLAECQQDIIQSQHTRILIVDEYIDEVLGIALKQDLLTALIQGEGYKTIAELARPAQFVPEGMRADKLLKQFQEKREHLMVVIDEYGGVAGVITLEDVVEVLTGEIVDETDKNIDLQEIARKKRQALLKQRGVAP.

The next 4 helical transmembrane spans lie at 1-21 (MLEI…CSCA), 58-78 (IGTI…TIGA), 87-107 (AWMG…GEII), and 121-141 (LLIA…VWLI). The region spanning 1–179 (MLEIVAAIFI…YKEGVIEGDE (179 aa)) is the CNNM transmembrane domain. CBS domains are found at residues 198–259 (MTPR…GYKT) and 263–320 (LARP…IVDE).

Belongs to the UPF0053 family.

The protein localises to the cell membrane. In Synechocystis sp. (strain ATCC 27184 / PCC 6803 / Kazusa), this protein is UPF0053 protein sll1254.